The following is a 333-amino-acid chain: NADH-quinone oxidoreductase subunit H (333 aa).

The next 8 membrane-spanning stretches (helical) occupy residues 17 to 37, 88 to 108, 117 to 137, 159 to 179, 191 to 211, 241 to 261, 273 to 293, and 313 to 333; these read IFFA…TYGI, FILA…ALPF, IGVG…GVVT, ISYE…SGSL, VWFI…AVAE, FFML…TVLF, FIPG…LFIW, and VLLP…QLFF.

It belongs to the complex I subunit 1 family. In terms of assembly, NDH-1 is composed of 14 different subunits. Subunits NuoA, H, J, K, L, M, N constitute the membrane sector of the complex.

It localises to the cell membrane. The catalysed reaction is a quinone + NADH + 5 H(+)(in) = a quinol + NAD(+) + 4 H(+)(out). Functionally, NDH-1 shuttles electrons from NADH, via FMN and iron-sulfur (Fe-S) centers, to quinones in the respiratory chain. The immediate electron acceptor for the enzyme in this species is believed to be ubiquinone. Couples the redox reaction to proton translocation (for every two electrons transferred, four hydrogen ions are translocated across the cytoplasmic membrane), and thus conserves the redox energy in a proton gradient. This subunit may bind ubiquinone. The sequence is that of NADH-quinone oxidoreductase subunit H from Anoxybacillus flavithermus (strain DSM 21510 / WK1).